Consider the following 629-residue polypeptide: Replication protein A 70 kDa DNA-binding subunit D (629 aa).

The segment at 112 to 135 (LDSKSGEEEAREPKKQKLEHSPVS) is disordered. Basic and acidic residues predominate over residues 115 to 131 (KSGEEEAREPKKQKLEH). Positions 194–280 (WTIKVRVTNK…QNDYEMTLNE (87 aa)) form a DNA-binding region, OB. The segment at 492–512 (CKTCNKKVTEALDSGYWCEGC) adopts a C4-type zinc-finger fold.

Belongs to the replication factor A protein 1 family. As to quaternary structure, heterotrimer of RPA1, RPA2 and RPA3 (canonical replication protein A complex).

It localises to the nucleus. Its function is as follows. Component of the replication protein A complex (RPA) required for DNA recombination, repair and replication. The activity of RPA is mediated by single-stranded DNA binding and protein interactions. Probably involved in repair of double-strand DNA breaks (DSBs) induced by genotoxic stresses. The chain is Replication protein A 70 kDa DNA-binding subunit D (RPA1D) from Arabidopsis thaliana (Mouse-ear cress).